We begin with the raw amino-acid sequence, 164 residues long: SsrA-binding protein (164 aa).

Positions 141–164 (KLHDKRQDEKQKSIKKEINSALKR) are disordered. Basic and acidic residues predominate over residues 145–158 (KRQDEKQKSIKKEI).

The protein belongs to the SmpB family.

Its subcellular location is the cytoplasm. Functionally, required for rescue of stalled ribosomes mediated by trans-translation. Binds to transfer-messenger RNA (tmRNA), required for stable association of tmRNA with ribosomes. tmRNA and SmpB together mimic tRNA shape, replacing the anticodon stem-loop with SmpB. tmRNA is encoded by the ssrA gene; the 2 termini fold to resemble tRNA(Ala) and it encodes a 'tag peptide', a short internal open reading frame. During trans-translation Ala-aminoacylated tmRNA acts like a tRNA, entering the A-site of stalled ribosomes, displacing the stalled mRNA. The ribosome then switches to translate the ORF on the tmRNA; the nascent peptide is terminated with the 'tag peptide' encoded by the tmRNA and targeted for degradation. The ribosome is freed to recommence translation, which seems to be the essential function of trans-translation. The chain is SsrA-binding protein from Prochlorococcus marinus (strain AS9601).